The sequence spans 1097 residues: Protein toll (1097 aa).

An N-terminal signal peptide occupies residues 1-27 (MSRLKAASELALLVIILQLLQWPGSEA). The Extracellular segment spans residues 28–807 (SFGRDACSEM…ICPAEKGVFI (780 aa)). Intrachain disulfides connect cysteine 34–cysteine 45, cysteine 43–cysteine 56, and cysteine 79–cysteine 107. N-linked (GlcNAc...) asparagine glycosylation is found at asparagine 80, asparagine 140, and asparagine 175. 15 LRR repeats span residues 175-195 (NLSHLELRANIEEMPSHLFDD), 198-219 (NLESIEFGSNKLRQMPRGIFGK), 222-243 (KLKQLNLWSNQLHNLTKHDFEG), 246-267 (SVLGIDIHDNGIEQLPHDVFAH), 270-291 (NVTDINLSANLFRSLPQGLFDH), 294-314 (HLNEVRLMNNRVPLATLPSRL), 320-340 (ELQILRLRAELQSLPGDLFEH), 343-364 (QITNISLGDNLLKTLPATLLEH), 367-388 (NLLSLDLSNNRLTHLPDSLFAH), 391-412 (NLTDLRLEDNLLTGISGDIFSN), 415-436 (NLVTLVMSRNRLRTIDSRAFVS), 439-460 (GLRHLHLDHNDIDLQQPLLDIM), 474-495 (GLLTLNLRNNSIIFVYNDWKNT), 498-521 (QLRELDLSYNNISSLGYEDLAFLS), and 523-544 (NRLHVNMTHNKIRRIALPEDVH). An N-linked (GlcNAc...) asparagine glycan is attached at asparagine 235. N-linked (GlcNAc...) asparagine glycosylation is found at asparagine 270 and asparagine 275. An N-linked (GlcNAc...) asparagine glycan is attached at asparagine 346. N-linked (GlcNAc...) asparagine glycosylation is present at asparagine 391. Residues asparagine 482, asparagine 508, and asparagine 528 are each glycosylated (N-linked (GlcNAc...) asparagine). Residues 561–620 (NPLVCDCTILWFIQLVRGVHKPQYSRQFKLRTDRLVCSQPNVLEGTPVRQIEPQTLICPL) form the LRRCT 1 domain. Cystine bridges form between cysteine 565–cysteine 597, cysteine 567–cysteine 618, cysteine 631–cysteine 637, and cysteine 635–cysteine 650. In terms of domain architecture, LRRNT spans 622–663 (FSDDPRERKCPRGCNCHVRTYDKALVINCHSGNLTHVPRLPN). Residues asparagine 654, asparagine 677, asparagine 703, asparagine 715, asparagine 730, and asparagine 738 are each glycosylated (N-linked (GlcNAc...) asparagine). LRR repeat units follow at residues 669-690 (QLMELHLENNTLLRLPSANTPG), 693-713 (SVTSLHLAGNNLTSIDVDQLP), and 715-738 (NLTHLDISWNHLQMLNATVLGFLN). An LRRCT 2 domain is found at 751 to 801 (NPWMCDCTAKPLLLFTQDNFERIGDRNEMMCVNAEMPTRMVELSTNDICPA). Intrachain disulfides connect cysteine 755–cysteine 781 and cysteine 757–cysteine 799. A helical membrane pass occupies residues 808-828 (ALAVVIALTGLLAGFTAALYY). Residues 829 to 1097 (KFQTEIKIWL…INTNAKQSDV (269 aa)) lie on the Cytoplasmic side of the membrane. Residues 857-993 (KKFDAFISYS…WFWDKLRFAL (137 aa)) enclose the TIR domain.

Belongs to the Toll-like receptor family. In the absence of ligand, forms a low-affinity disulfide-linked homodimer. In the presence of ligand, crystal structures show one Tl molecule bound to a spaetzle C-106 homodimer. However, the active complex probably consists of two Tl molecules bound to a spaetzle C-106 homodimer. This is supported by in vitro experiments which also show binding of the spaetzle C-106 dimer to 2 Tl receptors. Ligand binding induces conformational changes in the extracellular domain of Tl. This may enable a secondary homodimerization interface at the C-terminus of the Tl extracellular domain. In terms of tissue distribution, in early embryos, concentrated in the pseudocleavage furrows that form transiently between nuclei before cellularization and in the cleavage furrows during cellularization (at protein level). Later, found on cells in the mesectoderm, stomodeum, proctodeum, anterior and posterior midguts, splanchnopleura, salivary gland placode and adjacent to the segmentally repeated tracheal placodes (at protein level). During and after germ band shortening, localized in a number of cell types, including the salivary gland, foregut, hindgut, Malpighian tubules and epidermis (at protein level). In embryos, high expression in M13 with comparatively low expression in M12.

Its subcellular location is the cell membrane. The protein localises to the cytoplasm. Its function is as follows. Receptor for the cleaved activated form of spz, spaetzle C-106. Binding to spaetzle C-106 activates the Toll signaling pathway and induces expression of the antifungal peptide drosomycin. Component of the extracellular signaling pathway that establishes dorsal-ventral polarity in the embryo. Promotes heterophilic cellular adhesion. Involved in synaptic targeting of motoneurons RP5 and V to muscle 12 (M12); functions as a repulsive cue inhibiting motoneuron synapse formation on muscle 13 (M13) to guide RP5 and V to the neighboring M12, where its expression is repressed by tey. May also function in embryonic neuronal survival and the synaptic targeting of SNa motoneurons. In Drosophila melanogaster (Fruit fly), this protein is Protein toll.